Here is a 227-residue protein sequence, read N- to C-terminus: Threonine--tRNA ligase (227 aa).

Residues 1–120 (DIELKLSTRP…LIEHYEGAFP (120 aa)) are catalytic.

The protein belongs to the class-II aminoacyl-tRNA synthetase family. As to quaternary structure, homodimer.

It is found in the cytoplasm. The catalysed reaction is tRNA(Thr) + L-threonine + ATP = L-threonyl-tRNA(Thr) + AMP + diphosphate + H(+). Functionally, catalyzes the attachment of threonine to tRNA(Thr) in a two-step reaction: L-threonine is first activated by ATP to form Thr-AMP and then transferred to the acceptor end of tRNA(Thr). Also edits incorrectly charged L-seryl-tRNA(Thr). This chain is Threonine--tRNA ligase, found in Pseudomonas syringae pv. syringae.